The following is a 408-amino-acid chain: MLVTLKTLQQQTFKIDIDPDETVRALKEKIESEKGKDAFPVAGQKLIYAGKILNDDTALKEYKIDEKNFVVVMVTKPKAVTTPAPATTQQSNSAATTTVSSSTAPAVTQAPAPAPASAPTPTPVSVTPAPTTASSEPAPASAAKQEKPAERPVETPVATTPTSTDSTSGDSSRSNLFEDATSALVTGQSYENMVTEIMSMGYEREQVIAALRASFNNPDRAVEYLLMGIPGDRESQAVVDPPPAASTGAPQSSVAAAAATTTATTTTTSSGGHPLEFLRNQPQFQQMRQIIQQNPSLLPALLQQIGRENPQLLQQISQHQEHFIQMLNEPVQEAGGQGGGGGGGSGGIAEAGGGHMNYIQVTPQEKEAIERLKALGFPEGLVIQAYFACEKNENLAANFLLQQNFDED.

The region spanning 1–79 is the Ubiquitin-like domain; sequence MLVTLKTLQQ…VVVMVTKPKA (79 aa). A compositionally biased stretch (low complexity) spans 80–111; sequence VTTPAPATTQQSNSAATTTVSSSTAPAVTQAP. A disordered region spans residues 80–176; the sequence is VTTPAPATTQ…TSGDSSRSNL (97 aa). Residues 112–122 show a composition bias toward pro residues; it reads APAPASAPTPT. Low complexity predominate over residues 123–143; sequence PVSVTPAPTTASSEPAPASAA. Over residues 144-153 the composition is skewed to basic and acidic residues; the sequence is KQEKPAERPV. The span at 154 to 174 shows a compositional bias: low complexity; that stretch reads ETPVATTPTSTDSTSGDSSRS. 2 positions are modified to phosphothreonine: Thr155 and Thr164. Position 174 is a phosphoserine (Ser174). Phosphothreonine is present on Thr186. Residues 188-228 form the UBA 1 domain; it reads QSYENMVTEIMSMGYEREQVIAALRASFNNPDRAVEYLLMG. Ser199 is modified (phosphoserine). Position 202 is a phosphotyrosine (Tyr202). The interval 236 to 274 is disordered; that stretch reads QAVVDPPPAASTGAPQSSVAAAAATTTATTTTTSSGGHP. The span at 255–268 shows a compositional bias: low complexity; the sequence is AAAAATTTATTTTT. Residues 273–316 form the STI1 domain; it reads HPLEFLRNQPQFQQMRQIIQQNPSLLPALLQQIGRENPQLLQQI. Positions 363–403 constitute a UBA 2 domain; the sequence is PQEKEAIERLKALGFPEGLVIQAYFACEKNENLAANFLLQQ.

This sequence belongs to the RAD23 family. As to quaternary structure, component of the XPC complex composed of XPC, RAD23B and CETN2. Interacts with NGLY1 and PSMC1. Interacts with ATXN3. Interacts with PSMD4 and PSMC5. Interacts with AMFR. Interacts with VCP; the interaction is indirect and mediated by NGLY1.

The protein localises to the nucleus. Its subcellular location is the cytoplasm. Functionally, multiubiquitin chain receptor involved in modulation of proteasomal degradation. Binds to polyubiquitin chains. Proposed to be capable to bind simultaneously to the 26S proteasome and to polyubiquitinated substrates and to deliver ubiquitinated proteins to the proteasome. May play a role in endoplasmic reticulum-associated degradation (ERAD) of misfolded glycoproteins by association with PNGase and delivering deglycosylated proteins to the proteasome. Its function is as follows. Involved in global genome nucleotide excision repair (GG-NER) by acting as component of the XPC complex. Cooperatively with CETN2 appears to stabilize XPC. May protect XPC from proteasomal degradation. In terms of biological role, the XPC complex is proposed to represent the first factor bound at the sites of DNA damage and together with other core recognition factors, XPA, RPA and the TFIIH complex, is part of the pre-incision (or initial recognition) complex. The XPC complex recognizes a wide spectrum of damaged DNA characterized by distortions of the DNA helix such as single-stranded loops, mismatched bubbles or single-stranded overhangs. The orientation of XPC complex binding appears to be crucial for inducing a productive NER. XPC complex is proposed to recognize and to interact with unpaired bases on the undamaged DNA strand which is followed by recruitment of the TFIIH complex and subsequent scanning for lesions in the opposite strand in a 5'-to-3' direction by the NER machinery. Cyclobutane pyrimidine dimers (CPDs) which are formed upon UV-induced DNA damage esacpe detection by the XPC complex due to a low degree of structural perurbation. Instead they are detected by the UV-DDB complex which in turn recruits and cooperates with the XPC complex in the respective DNA repair. In vitro, the XPC:RAD23B dimer is sufficient to initiate NER; it preferentially binds to cisplatin and UV-damaged double-stranded DNA and also binds to a variety of chemically and structurally diverse DNA adducts. XPC:RAD23B contacts DNA both 5' and 3' of a cisplatin lesion with a preference for the 5' side. XPC:RAD23B induces a bend in DNA upon binding. XPC:RAD23B stimulates the activity of DNA glycosylases TDG and SMUG1. This Bos taurus (Bovine) protein is UV excision repair protein RAD23 homolog B (RAD23B).